Here is a 307-residue protein sequence, read N- to C-terminus: Elongation factor Ts (307 aa).

The interval 80–83 is involved in Mg(2+) ion dislocation from EF-Tu; it reads TDFV.

This sequence belongs to the EF-Ts family.

It localises to the cytoplasm. Its function is as follows. Associates with the EF-Tu.GDP complex and induces the exchange of GDP to GTP. It remains bound to the aminoacyl-tRNA.EF-Tu.GTP complex up to the GTP hydrolysis stage on the ribosome. In Methylobacterium sp. (strain 4-46), this protein is Elongation factor Ts.